The chain runs to 143 residues: Transcriptional regulator MraZ (143 aa).

2 consecutive SpoVT-AbrB domains span residues 5 to 47 (EYHH…PIEE) and 76 to 119 (AMES…SAER).

It belongs to the MraZ family. As to quaternary structure, forms oligomers.

The protein resides in the cytoplasm. Its subcellular location is the nucleoid. The chain is Transcriptional regulator MraZ from Lactobacillus johnsonii (strain CNCM I-12250 / La1 / NCC 533).